Here is a 148-residue protein sequence, read N- to C-terminus: MWNPNAGQPGPNPYPPNIGCPGGSNPAHPPPINPPFPPGPCPPPPGAPHGNPAFPPGGPPHPVPQPGYPGCQPLGPYPPPYPPPAPGIPPVNPLAPGMVGPAVIVDKKMQKKMKKAHKKMHKHQKHHKYHKHGKHSSSSSSSSSSDSD.

The tract at residues methionine 1–aspartate 148 is disordered. Composition is skewed to pro residues over residues alanine 27–glycine 67 and glycine 75–proline 93. Residues methionine 109 to histidine 135 show a composition bias toward basic residues. Low complexity predominate over residues serine 136–aspartate 148.

It is found in the nucleus. In terms of biological role, negatively regulates TSP1 expression at the level of transcription. This down-regulation was shown to reduce taxane-induced apoptosis. The polypeptide is Proline-rich protein 13 (PRR13) (Homo sapiens (Human)).